The sequence spans 141 residues: Flagellar assembly factor FliW (141 aa).

Belongs to the FliW family. As to quaternary structure, interacts with translational regulator CsrA and flagellin(s).

It localises to the cytoplasm. Acts as an anti-CsrA protein, binds CsrA and prevents it from repressing translation of its target genes, one of which is flagellin. Binds to flagellin and participates in the assembly of the flagellum. The sequence is that of Flagellar assembly factor FliW from Clostridium beijerinckii (strain ATCC 51743 / NCIMB 8052) (Clostridium acetobutylicum).